The chain runs to 248 residues: MSVTMRQMLEAGVHFGHQTRFWNPRMAPFIFGHRNKIHIVNLEKSLPMFQEAQKFVRQLSANKGNVLFVGTKRAARDIVREEAQRAGMPYVDQRWLGGMLTNFKTVKQSIKRLNDLEAQIAEPGRLSKKEILTVQREVDKLNRSLGGIREMGGLPDALFIIDVGYQKGAVVEAKKLGIPVIGVVDTNNSPEGVDYVIPGNDDSARAIRLYARGMADAALEGRAQVISEIVGGEEFVEVEEEEGGVAAE.

The protein belongs to the universal ribosomal protein uS2 family.

In Thiobacillus denitrificans (strain ATCC 25259 / T1), this protein is Small ribosomal subunit protein uS2.